A 436-amino-acid chain; its full sequence is Phosphate-repressible acid phosphatase (436 aa).

Positions methionine 1 to alanine 20 are cleaved as a signal peptide. 3 N-linked (GlcNAc...) asparagine glycosylation sites follow: asparagine 227, asparagine 283, and asparagine 304.

As to quaternary structure, monomer.

The enzyme catalyses a phosphate monoester + H2O = an alcohol + phosphate. The chain is Phosphate-repressible acid phosphatase (pacA) from Aspergillus niger.